The chain runs to 409 residues: Glutamyl-tRNA(Gln) amidotransferase subunit D (409 aa).

One can recognise an Asparaginase/glutaminase domain in the interval 68–390 (RKISVLATGG…DLFRDLFRKN (323 aa)). Catalysis depends on residues Thr78, Thr152, Asp153, and Lys230.

This sequence belongs to the asparaginase 1 family. GatD subfamily. Heterodimer of GatD and GatE.

The enzyme catalyses L-glutamyl-tRNA(Gln) + L-glutamine + ATP + H2O = L-glutaminyl-tRNA(Gln) + L-glutamate + ADP + phosphate + H(+). Allows the formation of correctly charged Gln-tRNA(Gln) through the transamidation of misacylated Glu-tRNA(Gln) in organisms which lack glutaminyl-tRNA synthetase. The reaction takes place in the presence of glutamine and ATP through an activated gamma-phospho-Glu-tRNA(Gln). The GatDE system is specific for glutamate and does not act on aspartate. The protein is Glutamyl-tRNA(Gln) amidotransferase subunit D of Thermoplasma acidophilum (strain ATCC 25905 / DSM 1728 / JCM 9062 / NBRC 15155 / AMRC-C165).